Reading from the N-terminus, the 188-residue chain is Elongation factor P (188 aa).

Position 34 is an N6-(3,6-diaminohexanoyl)-5-hydroxylysine (Lys-34).

It belongs to the elongation factor P family. Post-translationally, may be beta-lysylated on the epsilon-amino group of Lys-34 by the combined action of EpmA and EpmB, and then hydroxylated on the C5 position of the same residue by EpmC (if this protein is present). Lysylation is critical for the stimulatory effect of EF-P on peptide-bond formation. The lysylation moiety may extend toward the peptidyltransferase center and stabilize the terminal 3-CCA end of the tRNA. Hydroxylation of the C5 position on Lys-34 may allow additional potential stabilizing hydrogen-bond interactions with the P-tRNA.

It is found in the cytoplasm. It functions in the pathway protein biosynthesis; polypeptide chain elongation. In terms of biological role, involved in peptide bond synthesis. Alleviates ribosome stalling that occurs when 3 or more consecutive Pro residues or the sequence PPG is present in a protein, possibly by augmenting the peptidyl transferase activity of the ribosome. Modification of Lys-34 is required for alleviation. This Haemophilus influenzae (strain PittGG) protein is Elongation factor P.